The following is a 425-amino-acid chain: Serine--tRNA ligase (425 aa).

The segment at Asn-110–Pro-134 is disordered. Residues Pro-117–Pro-134 are compositionally biased toward basic and acidic residues. Thr-233–Glu-235 lines the L-serine pocket. ATP is bound at residue Arg-264–Glu-266. Glu-287 contributes to the L-serine binding site. Glu-351–Ser-354 contributes to the ATP binding site. L-serine is bound at residue Ser-385.

This sequence belongs to the class-II aminoacyl-tRNA synthetase family. Type-1 seryl-tRNA synthetase subfamily. In terms of assembly, homodimer. The tRNA molecule binds across the dimer.

It localises to the cytoplasm. The enzyme catalyses tRNA(Ser) + L-serine + ATP = L-seryl-tRNA(Ser) + AMP + diphosphate + H(+). It carries out the reaction tRNA(Sec) + L-serine + ATP = L-seryl-tRNA(Sec) + AMP + diphosphate + H(+). Its pathway is aminoacyl-tRNA biosynthesis; selenocysteinyl-tRNA(Sec) biosynthesis; L-seryl-tRNA(Sec) from L-serine and tRNA(Sec): step 1/1. Functionally, catalyzes the attachment of serine to tRNA(Ser). Is also able to aminoacylate tRNA(Sec) with serine, to form the misacylated tRNA L-seryl-tRNA(Sec), which will be further converted into selenocysteinyl-tRNA(Sec). This chain is Serine--tRNA ligase, found in Synechococcus sp. (strain RCC307).